We begin with the raw amino-acid sequence, 109 residues long: Nucleoid-associated protein CGSHiEE_00780 (109 aa).

This sequence belongs to the YbaB/EbfC family. Homodimer.

Its subcellular location is the cytoplasm. The protein resides in the nucleoid. Binds to DNA and alters its conformation. May be involved in regulation of gene expression, nucleoid organization and DNA protection. This chain is Nucleoid-associated protein CGSHiEE_00780, found in Haemophilus influenzae (strain PittEE).